We begin with the raw amino-acid sequence, 278 residues long: HTH-type transcriptional activator RhaS (278 aa).

Positions Asn-174–Gly-272 constitute an HTH araC/xylS-type domain. 2 DNA-binding regions (H-T-H motif) span residues Asp-191–Thr-212 and Val-239–Phe-262.

Binds DNA as a dimer.

The protein localises to the cytoplasm. Functionally, activates expression of the rhaBAD and rhaT operons. The polypeptide is HTH-type transcriptional activator RhaS (Shigella dysenteriae serotype 1 (strain Sd197)).